Here is a 218-residue protein sequence, read N- to C-terminus: dTTP/UTP pyrophosphatase (218 aa).

D76 serves as the catalytic Proton acceptor.

This sequence belongs to the Maf family. YhdE subfamily. It depends on a divalent metal cation as a cofactor.

The protein resides in the cytoplasm. The catalysed reaction is dTTP + H2O = dTMP + diphosphate + H(+). It catalyses the reaction UTP + H2O = UMP + diphosphate + H(+). Nucleoside triphosphate pyrophosphatase that hydrolyzes dTTP and UTP. May have a dual role in cell division arrest and in preventing the incorporation of modified nucleotides into cellular nucleic acids. The protein is dTTP/UTP pyrophosphatase of Cytophaga hutchinsonii (strain ATCC 33406 / DSM 1761 / CIP 103989 / NBRC 15051 / NCIMB 9469 / D465).